The following is a 143-amino-acid chain: Large ribosomal subunit protein uL13 (143 aa).

This sequence belongs to the universal ribosomal protein uL13 family. As to quaternary structure, part of the 50S ribosomal subunit.

This protein is one of the early assembly proteins of the 50S ribosomal subunit, although it is not seen to bind rRNA by itself. It is important during the early stages of 50S assembly. The protein is Large ribosomal subunit protein uL13 of Albidiferax ferrireducens (strain ATCC BAA-621 / DSM 15236 / T118) (Rhodoferax ferrireducens).